The primary structure comprises 542 residues: Protein lin-9 homolog (542 aa).

At Ala2 the chain carries N-acetylalanine. Lys21 is covalently cross-linked (Glycyl lysine isopeptide (Lys-Gly) (interchain with G-Cter in SUMO2)). A phosphoserine mark is found at Ser65 and Ser95. Phosphothreonine is present on residues Thr96 and Thr304. 2 positions are modified to phosphoserine: Ser309 and Ser321.

The protein belongs to the lin-9 family. As to quaternary structure, component of the DREAM complex (also named LINC complex) at least composed of E2F4, E2F5, LIN9, LIN37, LIN52, LIN54, MYBL1, MYBL2, RBL1, RBL2, RBBP4, TFDP1 and TFDP2. The complex exists in quiescent cells where it represses cell cycle-dependent genes. It dissociates in S phase when LIN9, LIN37, LIN52 and LIN54 form a subcomplex that binds to MYBL2. Interacts with RB1.

The protein resides in the nucleus. It is found in the nucleoplasm. Functionally, acts as a tumor suppressor. Inhibits DNA synthesis. Its ability to inhibit oncogenic transformation is mediated through its association with RB1. Plays a role in the expression of genes required for the G1/S transition. This is Protein lin-9 homolog (Lin9) from Mus musculus (Mouse).